A 608-amino-acid chain; its full sequence is ATP-citrate synthase beta chain protein 1 (608 aa).

ATP is bound by residues 214-234 and 265-291; these read ILRF…ELGG and FKSE…KNQA. E231 serves as a coordination point for Mg(2+). Catalysis depends on H273, which acts as the Tele-phosphohistidine intermediate. CoA is bound at residue 292–302; sequence LQDAGATVPTS.

The protein belongs to the succinate/malate CoA ligase alpha subunit family. In terms of assembly, heterooctamer of 4 alpha and 4 beta chains.

It localises to the cytoplasm. The protein resides in the cytosol. It carries out the reaction oxaloacetate + acetyl-CoA + ADP + phosphate = citrate + ATP + CoA. Functionally, ATP citrate-lyase is the primary enzyme responsible for the synthesis of cytosolic acetyl-CoA, used for the elongation of fatty acids and biosynthesis of isoprenoids, flavonoids and malonated derivatives. May supply substrate to the cytosolic acetyl-CoA carboxylase, which generates the malonyl-CoA used for the synthesis of a multitude of compounds, including very long chain fatty acids and flavonoids. Required for normal growth and development and elongation of C18 fatty acids to C20 to C24 fatty acids in seeds. In contrast to all known animal ACL enzymes having a homomeric structure, plant ACLs are composed of alpha and beta chains. The sequence is that of ATP-citrate synthase beta chain protein 1 (ACLB-1) from Arabidopsis thaliana (Mouse-ear cress).